The chain runs to 90 residues: MQFFVYSAVAAGFGIAIAAFGCGIGQGMAVRGAVEGIARNPEASGKVTVTMLIGLAMIESLSIYALVVSLILIYANPVSTAMQGFVGLGK.

2 helical membrane passes run 4–24 (FVYSAVAAGFGIAIAAFGCGI) and 53–73 (IGLAMIESLSIYALVVSLILI).

This sequence belongs to the ATPase C chain family. F-type ATPases have 2 components, F(1) - the catalytic core - and F(0) - the membrane proton channel. F(1) has five subunits: alpha(3), beta(3), gamma(1), delta(1), epsilon(1). F(0) has three main subunits: a(1), b(2) and c(10-14). The alpha and beta chains form an alternating ring which encloses part of the gamma chain. F(1) is attached to F(0) by a central stalk formed by the gamma and epsilon chains, while a peripheral stalk is formed by the delta and b chains.

It is found in the cell inner membrane. Functionally, f(1)F(0) ATP synthase produces ATP from ADP in the presence of a proton or sodium gradient. F-type ATPases consist of two structural domains, F(1) containing the extramembraneous catalytic core and F(0) containing the membrane proton channel, linked together by a central stalk and a peripheral stalk. During catalysis, ATP synthesis in the catalytic domain of F(1) is coupled via a rotary mechanism of the central stalk subunits to proton translocation. In terms of biological role, key component of the F(0) channel; it plays a direct role in translocation across the membrane. A homomeric c-ring of between 10-14 subunits forms the central stalk rotor element with the F(1) delta and epsilon subunits. This Syntrophobacter fumaroxidans (strain DSM 10017 / MPOB) protein is ATP synthase subunit c.